A 185-amino-acid chain; its full sequence is RING-H2 finger protein ATL8 (185 aa).

A helical membrane pass occupies residues 28 to 48 (LVLILAVLLCALTCIIGLIAV). Residues 104 to 146 (CAICLTEFAAGDELRVLPQCGHGFHVSCIDTWLGSHSSCPSCR) form an RING-type; atypical zinc finger. The disordered stretch occupies residues 161–185 (PGSSSSGPEPDTRIKQREDGPDNLP). A compositionally biased stretch (basic and acidic residues) spans 170–185 (PDTRIKQREDGPDNLP).

The protein belongs to the RING-type zinc finger family. ATL subfamily.

It localises to the membrane. It catalyses the reaction S-ubiquitinyl-[E2 ubiquitin-conjugating enzyme]-L-cysteine + [acceptor protein]-L-lysine = [E2 ubiquitin-conjugating enzyme]-L-cysteine + N(6)-ubiquitinyl-[acceptor protein]-L-lysine.. It functions in the pathway protein modification; protein ubiquitination. The chain is RING-H2 finger protein ATL8 (ATL8) from Arabidopsis thaliana (Mouse-ear cress).